The sequence spans 255 residues: Thiazole synthase (255 aa).

The active-site Schiff-base intermediate with DXP is the K97. 1-deoxy-D-xylulose 5-phosphate is bound by residues G158, 184–185, and 206–207; these read AG and NT.

Belongs to the ThiG family. In terms of assembly, homotetramer. Forms heterodimers with either ThiH or ThiS.

The protein localises to the cytoplasm. It carries out the reaction [ThiS sulfur-carrier protein]-C-terminal-Gly-aminoethanethioate + 2-iminoacetate + 1-deoxy-D-xylulose 5-phosphate = [ThiS sulfur-carrier protein]-C-terminal Gly-Gly + 2-[(2R,5Z)-2-carboxy-4-methylthiazol-5(2H)-ylidene]ethyl phosphate + 2 H2O + H(+). Its pathway is cofactor biosynthesis; thiamine diphosphate biosynthesis. Catalyzes the rearrangement of 1-deoxy-D-xylulose 5-phosphate (DXP) to produce the thiazole phosphate moiety of thiamine. Sulfur is provided by the thiocarboxylate moiety of the carrier protein ThiS. In vitro, sulfur can be provided by H(2)S. The sequence is that of Thiazole synthase from Acetivibrio thermocellus (strain ATCC 27405 / DSM 1237 / JCM 9322 / NBRC 103400 / NCIMB 10682 / NRRL B-4536 / VPI 7372) (Clostridium thermocellum).